The following is an 890-amino-acid chain: Translation initiation factor IF-2 (890 aa).

The interval 45–304 (LIDHLNQKNS…LQQGFQKPAQ (260 aa)) is disordered. The span at 67–81 (STLNIPGTGGKSKSV) shows a compositional bias: polar residues. Basic and acidic residues predominate over residues 92 to 217 (VKRDPQEAER…RMAEENKWTD (126 aa)). Positions 252–266 (GRGRNAKAARPKKGN) are enriched in basic residues. Basic and acidic residues predominate over residues 267–280 (KHAESKADREEARA). The tr-type G domain maps to 389–558 (PRAPVVTIMG…LLQAEVLELK (170 aa)). The interval 398-405 (GHVDHGKT) is G1. GTP is bound at residue 398 to 405 (GHVDHGKT). The G2 stretch occupies residues 423-427 (GITQH). A G3 region spans residues 444 to 447 (DTPG). GTP-binding positions include 444 to 448 (DTPGH) and 498 to 501 (NKID). Residues 498-501 (NKID) form a G4 region. The G5 stretch occupies residues 534–536 (SAK). K808 carries the post-translational modification N6-acetyllysine.

Belongs to the TRAFAC class translation factor GTPase superfamily. Classic translation factor GTPase family. IF-2 subfamily.

It is found in the cytoplasm. Its function is as follows. One of the essential components for the initiation of protein synthesis. Protects formylmethionyl-tRNA from spontaneous hydrolysis and promotes its binding to the 30S ribosomal subunits. Also involved in the hydrolysis of GTP during the formation of the 70S ribosomal complex. The sequence is that of Translation initiation factor IF-2 from Escherichia coli (strain SMS-3-5 / SECEC).